A 431-amino-acid chain; its full sequence is Glutamyl-tRNA reductase (431 aa).

Substrate-binding positions include 49 to 52 (TCNR), S109, 114 to 116 (EGQ), and Q120. C50 acts as the Nucleophile in catalysis. 189 to 194 (GAGKMS) contributes to the NADP(+) binding site.

This sequence belongs to the glutamyl-tRNA reductase family. In terms of assembly, homodimer.

The catalysed reaction is (S)-4-amino-5-oxopentanoate + tRNA(Glu) + NADP(+) = L-glutamyl-tRNA(Glu) + NADPH + H(+). It participates in porphyrin-containing compound metabolism; protoporphyrin-IX biosynthesis; 5-aminolevulinate from L-glutamyl-tRNA(Glu): step 1/2. It functions in the pathway porphyrin-containing compound metabolism; chlorophyll biosynthesis. Functionally, catalyzes the NADPH-dependent reduction of glutamyl-tRNA(Glu) to glutamate 1-semialdehyde (GSA). The protein is Glutamyl-tRNA reductase of Trichodesmium erythraeum (strain IMS101).